A 318-amino-acid chain; its full sequence is Cephalosporin-C deacetylase (318 aa).

Residue Tyr91 participates in substrate binding. Catalysis depends on Ser181, which acts as the Nucleophile. Residues Asp269 and His298 each act as charge relay system in the active site.

This sequence belongs to the carbohydrate esterase 7 family. Homohexamer.

Its subcellular location is the cytoplasm. The enzyme catalyses Deacetylation of xylans and xylo-oligosaccharides.. The catalysed reaction is cephalosporin C + H2O = deacetylcephalosporin C + acetate + H(+). Functionally, esterase that removed acetyl groups from a number of O-acetylated small substrates, such as acetylated xylose, short xylooligosaccharides and cephalosporin C. Has no activity towards polymeric acetylated xylan. Cannot cleave amide linkages. This is Cephalosporin-C deacetylase (cah) from Bacillus subtilis (strain 168).